The following is a 203-amino-acid chain: MLATLMFILAYLLGSISSAILVSRLFKLPDPRSNGSNNPGATNVYRLGGALPACLVLIFDVLKGTIPVWGAYFLDLEPLALGLVAVAACLGHMFPLFFGFKGGKAVATAFGSLLPIGLSLAGLLICTWFIMVAITRYSSLAALVAVSLAPLYTWLIKPLYTLPVTFITVLIIFRHRSNIARLFSGNEPKVGAKKAPTDEKSDI.

5 helical membrane passes run 2–22 (LATL…AILV), 54–74 (CLVL…AYFL), 80–100 (ALGL…FFGF), 114–134 (LPIG…MVAI), and 153–173 (TWLI…LIIF).

This sequence belongs to the PlsY family. In terms of assembly, probably interacts with PlsX.

Its subcellular location is the cell inner membrane. The catalysed reaction is an acyl phosphate + sn-glycerol 3-phosphate = a 1-acyl-sn-glycero-3-phosphate + phosphate. Its pathway is lipid metabolism; phospholipid metabolism. Functionally, catalyzes the transfer of an acyl group from acyl-phosphate (acyl-PO(4)) to glycerol-3-phosphate (G3P) to form lysophosphatidic acid (LPA). This enzyme utilizes acyl-phosphate as fatty acyl donor, but not acyl-CoA or acyl-ACP. The sequence is that of Glycerol-3-phosphate acyltransferase from Pseudoalteromonas translucida (strain TAC 125).